A 253-amino-acid polypeptide reads, in one-letter code: Probable transcriptional regulatory protein RBE_0568 (253 aa).

The segment at 1 to 21 (MAGHSKFKNIQHRKGAQDKKR) is disordered.

It belongs to the TACO1 family.

The protein localises to the cytoplasm. This Rickettsia bellii (strain RML369-C) protein is Probable transcriptional regulatory protein RBE_0568.